Reading from the N-terminus, the 350-residue chain is S-adenosylmethionine:tRNA ribosyltransferase-isomerase (350 aa).

This sequence belongs to the QueA family. As to quaternary structure, monomer.

The protein resides in the cytoplasm. It catalyses the reaction 7-aminomethyl-7-carbaguanosine(34) in tRNA + S-adenosyl-L-methionine = epoxyqueuosine(34) in tRNA + adenine + L-methionine + 2 H(+). It functions in the pathway tRNA modification; tRNA-queuosine biosynthesis. Its function is as follows. Transfers and isomerizes the ribose moiety from AdoMet to the 7-aminomethyl group of 7-deazaguanine (preQ1-tRNA) to give epoxyqueuosine (oQ-tRNA). The polypeptide is S-adenosylmethionine:tRNA ribosyltransferase-isomerase (Aliivibrio fischeri (strain ATCC 700601 / ES114) (Vibrio fischeri)).